We begin with the raw amino-acid sequence, 447 residues long: Nisin biosynthesis sensor protein NisK (447 aa).

Transmembrane regions (helical) follow at residues Val-15–Phe-35 and Thr-147–Ile-167. In terms of domain architecture, Histidine kinase spans Ala-235–Lys-447. The residue at position 238 (His-238) is a Phosphohistidine; by autocatalysis.

The protein localises to the cell membrane. The catalysed reaction is ATP + protein L-histidine = ADP + protein N-phospho-L-histidine.. Its function is as follows. Member of the two-component regulatory system NisK/NisR involved in the regulation of the biosynthesis of lantibiotic nisin. NisK may function as a membrane-associated protein kinase that phosphorylates NisR in response to environmental signals. The protein is Nisin biosynthesis sensor protein NisK (nisK) of Lactococcus lactis subsp. lactis (Streptococcus lactis).